An 832-amino-acid chain; its full sequence is Translation initiation factor IF-2 (832 aa).

A disordered region spans residues 1–249 (MSDDNDKPRT…GGGSSAPREK (249 aa)). The span at 53–71 (TPAPAPEPAPEPAPAPAPA) shows a compositional bias: pro residues. Over residues 89-144 (PQERVARLQREAEEERLKLAEDARKRDDQKAKQNADDEKKRQEENKKAEEEAEKQA) the composition is skewed to basic and acidic residues. Over residues 145-156 (AAEAEAAAAAEA) the composition is skewed to low complexity. Residues 180–200 (PEPKRPEKKKEEKKPARGGAK) show a composition bias toward basic and acidic residues. The tr-type G domain maps to 333 to 503 (PRPPVVTIMG…ELQAELLELK (171 aa)). Residues 342 to 349 (GHVDHGKT) are G1. Position 342–349 (342–349 (GHVDHGKT)) interacts with GTP. Residues 367–371 (GITQH) are G2. Residues 389 to 392 (DTPG) are G3. GTP-binding positions include 389 to 393 (DTPGH) and 443 to 446 (NKCD). The interval 443 to 446 (NKCD) is G4. Positions 479 to 481 (SAT) are G5.

The protein belongs to the TRAFAC class translation factor GTPase superfamily. Classic translation factor GTPase family. IF-2 subfamily.

It is found in the cytoplasm. Functionally, one of the essential components for the initiation of protein synthesis. Protects formylmethionyl-tRNA from spontaneous hydrolysis and promotes its binding to the 30S ribosomal subunits. Also involved in the hydrolysis of GTP during the formation of the 70S ribosomal complex. The protein is Translation initiation factor IF-2 of Erythrobacter litoralis (strain HTCC2594).